A 414-amino-acid chain; its full sequence is Protein DNA-DAMAGE INDUCIBLE 1 (414 aa).

Residues 1–76 (MRITVMTAGE…LMMMVSNASS (76 aa)) form the Ubiquitin-like domain. A Peptidase A2 domain is found at 213–292 (LKAFVDSGAQ…NMEFLFGLDM (80 aa)). Residue D218 is part of the active site. The interval 332 to 374 (ERVPNDASSSGATVPSGFTEKKNNTVANPTSQQPKRQNTSEGP) is disordered. A compositionally biased stretch (polar residues) spans 355 to 372 (NTVANPTSQQPKRQNTSE). In terms of domain architecture, UBA spans 374 to 414 (PEFEAKIAKLVELGFSRDSVIQALKLFEGNEEQAAGFLFGG).

Belongs to the DDI1 family. In terms of assembly, homodimer.

The protein localises to the cytoplasm. It is found in the cytosol. Receptor of ubiquitinated protein targeted to ubiquitin/proteasome-mediated proteolysis (UPP). Relatively weak affinity for both 'Lys-48'- and 'Lys-63'-linked ubiquitin chains with a slight preference for 'Lys-48-'linked chains of three or more ubiquitin units. The chain is Protein DNA-DAMAGE INDUCIBLE 1 from Arabidopsis thaliana (Mouse-ear cress).